Consider the following 123-residue polypeptide: Chondroitin proteoglycan 8 (123 aa).

An N-terminal signal peptide occupies residues 1–16 (MRPFILLALLFSVAIA). Residues 32–123 (SVRRSTRGAD…SGSGDEAPAE (92 aa)) form a disordered region. Positions 38–60 (RGADKKADSSDSSDSNEKDDKVT) are enriched in basic and acidic residues. 2 O-linked (Xyl...) (chondroitin sulfate) serine glycosylation sites follow: Ser-63 and Ser-65. Over residues 74–84 (EQLRRVARDVE) the composition is skewed to basic and acidic residues. O-linked (Xyl...) (chondroitin sulfate) serine glycans are attached at residues Ser-87, Ser-93, and Ser-114.

The protein is Chondroitin proteoglycan 8 (cpg-8) of Caenorhabditis briggsae.